The primary structure comprises 413 residues: Arginine biosynthesis bifunctional protein ArgJ (413 aa).

Substrate is bound by residues Thr-160, Lys-186, Thr-197, Glu-284, Asn-408, and Ser-413. Thr-197 serves as the catalytic Nucleophile.

Belongs to the ArgJ family. As to quaternary structure, heterotetramer of two alpha and two beta chains.

It localises to the cytoplasm. It catalyses the reaction N(2)-acetyl-L-ornithine + L-glutamate = N-acetyl-L-glutamate + L-ornithine. The catalysed reaction is L-glutamate + acetyl-CoA = N-acetyl-L-glutamate + CoA + H(+). It participates in amino-acid biosynthesis; L-arginine biosynthesis; L-ornithine and N-acetyl-L-glutamate from L-glutamate and N(2)-acetyl-L-ornithine (cyclic): step 1/1. The protein operates within amino-acid biosynthesis; L-arginine biosynthesis; N(2)-acetyl-L-ornithine from L-glutamate: step 1/4. Catalyzes two activities which are involved in the cyclic version of arginine biosynthesis: the synthesis of N-acetylglutamate from glutamate and acetyl-CoA as the acetyl donor, and of ornithine by transacetylation between N(2)-acetylornithine and glutamate. The sequence is that of Arginine biosynthesis bifunctional protein ArgJ from Burkholderia pseudomallei (strain K96243).